The following is a 160-amino-acid chain: Cytochrome c-type biogenesis protein CcmE (160 aa).

At 1 to 8 (MNPRRKKR) the chain is on the cytoplasmic side. The chain crosses the membrane as a helical; Signal-anchor for type II membrane protein span at residues 9-29 (LGIILAIFFGISATVGLMVYA). Over 30 to 160 (LNQNMDLFYT…TTEQKEGNAQ (131 aa)) the chain is Periplasmic. Positions 128 and 132 each coordinate heme.

The protein belongs to the CcmE/CycJ family.

The protein resides in the cell inner membrane. Functionally, heme chaperone required for the biogenesis of c-type cytochromes. Transiently binds heme delivered by CcmC and transfers the heme to apo-cytochromes in a process facilitated by CcmF and CcmH. In Vibrio atlanticus (strain LGP32) (Vibrio splendidus (strain Mel32)), this protein is Cytochrome c-type biogenesis protein CcmE.